A 103-amino-acid chain; its full sequence is Large ribosomal subunit protein bL21 (103 aa).

It belongs to the bacterial ribosomal protein bL21 family. Part of the 50S ribosomal subunit. Contacts protein L20.

In terms of biological role, this protein binds to 23S rRNA in the presence of protein L20. The sequence is that of Large ribosomal subunit protein bL21 from Shewanella sp. (strain ANA-3).